Consider the following 300-residue polypeptide: NADH-cytochrome b5 reductase 2 (300 aa).

Residues 12–29 form a helical membrane-spanning segment; sequence FVYPLVGATIGSIGLAYY. The FAD-binding FR-type domain occupies 49–153; the sequence is DQWIDLKLKK…KGPVVKWKWE (105 aa). FAD is bound at residue 156–191; the sequence is QFKSIALIGGGTGITPLYQLLREITSNPEDKTKVSL.

This sequence belongs to the flavoprotein pyridine nucleotide cytochrome reductase family. FAD serves as cofactor.

Its subcellular location is the mitochondrion outer membrane. It catalyses the reaction 2 Fe(III)-[cytochrome b5] + NADH = 2 Fe(II)-[cytochrome b5] + NAD(+) + H(+). In terms of biological role, may mediate the reduction of outer membrane cytochrome b5. This chain is NADH-cytochrome b5 reductase 2 (MCR1), found in Lodderomyces elongisporus (strain ATCC 11503 / CBS 2605 / JCM 1781 / NBRC 1676 / NRRL YB-4239) (Yeast).